A 281-amino-acid polypeptide reads, in one-letter code: NADPH-dependent 7-cyano-7-deazaguanine reductase (281 aa).

Residue 86-88 (IES) participates in substrate binding. Residue 88-89 (SK) participates in NADPH binding. The active-site Thioimide intermediate is the cysteine 189. Aspartate 196 serves as the catalytic Proton donor. Residue 228-229 (HE) coordinates substrate. An NADPH-binding site is contributed by 257–258 (RG).

The protein belongs to the GTP cyclohydrolase I family. QueF type 2 subfamily. As to quaternary structure, homodimer.

It is found in the cytoplasm. The catalysed reaction is 7-aminomethyl-7-carbaguanine + 2 NADP(+) = 7-cyano-7-deazaguanine + 2 NADPH + 3 H(+). The protein operates within tRNA modification; tRNA-queuosine biosynthesis. Its function is as follows. Catalyzes the NADPH-dependent reduction of 7-cyano-7-deazaguanine (preQ0) to 7-aminomethyl-7-deazaguanine (preQ1). This chain is NADPH-dependent 7-cyano-7-deazaguanine reductase, found in Mannheimia succiniciproducens (strain KCTC 0769BP / MBEL55E).